The sequence spans 156 residues: Cyanate hydratase (156 aa).

Catalysis depends on residues Arg-96, Glu-99, and Ser-122.

It belongs to the cyanase family.

It carries out the reaction cyanate + hydrogencarbonate + 3 H(+) = NH4(+) + 2 CO2. In terms of biological role, catalyzes the reaction of cyanate with bicarbonate to produce ammonia and carbon dioxide. This is Cyanate hydratase from Burkholderia ambifaria (strain MC40-6).